Here is a 217-residue protein sequence, read N- to C-terminus: Octanoyltransferase (217 aa).

The 176-residue stretch at serine 32 to glutamine 207 folds into the BPL/LPL catalytic domain. Substrate is bound by residues arginine 71 to histidine 78, serine 138 to glycine 140, and glycine 151 to alanine 153. Cysteine 169 functions as the Acyl-thioester intermediate in the catalytic mechanism.

It belongs to the LipB family.

It localises to the cytoplasm. The enzyme catalyses octanoyl-[ACP] + L-lysyl-[protein] = N(6)-octanoyl-L-lysyl-[protein] + holo-[ACP] + H(+). It participates in protein modification; protein lipoylation via endogenous pathway; protein N(6)-(lipoyl)lysine from octanoyl-[acyl-carrier-protein]: step 1/2. In terms of biological role, catalyzes the transfer of endogenously produced octanoic acid from octanoyl-acyl-carrier-protein onto the lipoyl domains of lipoate-dependent enzymes. Lipoyl-ACP can also act as a substrate although octanoyl-ACP is likely to be the physiological substrate. The protein is Octanoyltransferase of Shewanella sp. (strain MR-7).